The chain runs to 405 residues: Adenylosuccinate synthetase (405 aa).

Residues 12 to 18 (GDEGKGK) and 40 to 42 (GHT) each bind GTP. D13 functions as the Proton acceptor in the catalytic mechanism. Mg(2+) contacts are provided by D13 and G40. IMP is bound by residues 13–16 (DEGK), 38–41 (NAGH), T121, R135, Q213, T228, and R297. H41 serves as the catalytic Proton donor. 293–299 (TTTGRPR) contacts substrate. GTP is bound by residues R299, 325–327 (KMD), and 390–392 (SAG).

Belongs to the adenylosuccinate synthetase family. As to quaternary structure, homodimer. Requires Mg(2+) as cofactor.

The protein resides in the cytoplasm. The enzyme catalyses IMP + L-aspartate + GTP = N(6)-(1,2-dicarboxyethyl)-AMP + GDP + phosphate + 2 H(+). The protein operates within purine metabolism; AMP biosynthesis via de novo pathway; AMP from IMP: step 1/2. Functionally, plays an important role in the de novo pathway of purine nucleotide biosynthesis. Catalyzes the first committed step in the biosynthesis of AMP from IMP. This is Adenylosuccinate synthetase from Deinococcus radiodurans (strain ATCC 13939 / DSM 20539 / JCM 16871 / CCUG 27074 / LMG 4051 / NBRC 15346 / NCIMB 9279 / VKM B-1422 / R1).